A 188-amino-acid polypeptide reads, in one-letter code: Elongation factor P (188 aa).

This sequence belongs to the elongation factor P family.

The protein localises to the cytoplasm. It participates in protein biosynthesis; polypeptide chain elongation. In terms of biological role, involved in peptide bond synthesis. Stimulates efficient translation and peptide-bond synthesis on native or reconstituted 70S ribosomes in vitro. Probably functions indirectly by altering the affinity of the ribosome for aminoacyl-tRNA, thus increasing their reactivity as acceptors for peptidyl transferase. The sequence is that of Elongation factor P from Chlorobaculum tepidum (strain ATCC 49652 / DSM 12025 / NBRC 103806 / TLS) (Chlorobium tepidum).